Here is a 130-residue protein sequence, read N- to C-terminus: Fluoride-specific ion channel FluC (130 aa).

A run of 4 helical transmembrane segments spans residues 7–27, 36–56, 69–89, and 99–119; these read VLAICIGASLGALARWRLGLW, LGTLAANLIGGYLIGICVAVF, ALITGFLGGLTTFSSFSAEVV, and LGFGTAGLHLFGSLLLTLAGI. Positions 76 and 79 each coordinate Na(+).

The protein belongs to the fluoride channel Fluc/FEX (TC 1.A.43) family.

The protein localises to the cell inner membrane. It catalyses the reaction fluoride(in) = fluoride(out). Its activity is regulated as follows. Na(+) is not transported, but it plays an essential structural role and its presence is essential for fluoride channel function. Its function is as follows. Fluoride-specific ion channel. Important for reducing fluoride concentration in the cell, thus reducing its toxicity. The chain is Fluoride-specific ion channel FluC from Albidiferax ferrireducens (strain ATCC BAA-621 / DSM 15236 / T118) (Rhodoferax ferrireducens).